A 228-amino-acid chain; its full sequence is UPF0758 protein CLI_3057 (228 aa).

In terms of domain architecture, MPN spans K106 to I228. Zn(2+) is bound by residues H177, H179, and D190. A JAMM motif motif is present at residues H177–D190.

This sequence belongs to the UPF0758 family.

This Clostridium botulinum (strain Langeland / NCTC 10281 / Type F) protein is UPF0758 protein CLI_3057.